Here is a 340-residue protein sequence, read N- to C-terminus: Protein SSUH2 homolog (340 aa).

The segment covering 1 to 11 has biased composition (acidic residues); that stretch reads MDRDPSEEDSM. Positions 1–20 are disordered; that stretch reads MDRDPSEEDSMADLSFEAES.

As to expression, widely expressed, with highest levels in the liver, intestine, tongue and underjaw.

The protein localises to the cytoplasm. It is found in the nucleus. Plays a role in odontogenesis. The protein is Protein SSUH2 homolog of Mus musculus (Mouse).